A 337-amino-acid polypeptide reads, in one-letter code: Casein kinase I isoform alpha-like (337 aa).

Residue Lys8 is modified to N6-acetyllysine. The 269-residue stretch at 17–285 (YKLVRKIGSG…YLRQLFRILF (269 aa)) folds into the Protein kinase domain. Residues 23-31 (IGSGSFGDV) and Lys46 contribute to the ATP site. Asp136 (proton acceptor) is an active-site residue. Positions 309-325 (AASSSGQGQQAQTQTGK) are enriched in low complexity. The disordered stretch occupies residues 309-337 (AASSSGQGQQAQTQTGKQTEKNKNNVKDN). Basic and acidic residues predominate over residues 326 to 337 (QTEKNKNNVKDN).

Belongs to the protein kinase superfamily. CK1 Ser/Thr protein kinase family. Casein kinase I subfamily. Interacts with FAM83A, FAM83B, FAM83C, FAM83D, FAM83E, FAM83F, FAM83G and FAM83H (via DUF1669).

The protein resides in the cytoplasm. It catalyses the reaction L-seryl-[protein] + ATP = O-phospho-L-seryl-[protein] + ADP + H(+). The enzyme catalyses L-threonyl-[protein] + ATP = O-phospho-L-threonyl-[protein] + ADP + H(+). Its function is as follows. Casein kinases are operationally defined by their preferential utilization of acidic proteins such as caseins as substrates. It can phosphorylate a large number of proteins. Participates in Wnt signaling. In Homo sapiens (Human), this protein is Casein kinase I isoform alpha-like (CSNK1A1L).